A 117-amino-acid chain; its full sequence is Large ribosomal subunit protein uL18 (117 aa).

This sequence belongs to the universal ribosomal protein uL18 family. In terms of assembly, part of the 50S ribosomal subunit; part of the 5S rRNA/L5/L18/L25 subcomplex. Contacts the 5S and 23S rRNAs.

Its function is as follows. This is one of the proteins that bind and probably mediate the attachment of the 5S RNA into the large ribosomal subunit, where it forms part of the central protuberance. In Neisseria gonorrhoeae (strain ATCC 700825 / FA 1090), this protein is Large ribosomal subunit protein uL18.